A 64-amino-acid chain; its full sequence is Large ribosomal subunit protein bL35 (64 aa).

It belongs to the bacterial ribosomal protein bL35 family.

The protein is Large ribosomal subunit protein bL35 of Mycoplasmopsis pulmonis (strain UAB CTIP) (Mycoplasma pulmonis).